A 269-amino-acid chain; its full sequence is Undecaprenyl-diphosphatase (269 aa).

The next 7 helical transmembrane spans lie at 42 to 62 (WDTFIVLIQLGAVLGVVALYF), 83 to 103 (LTVLIGCIPAFAAGLALHGVI), 110 to 130 (PYLPQVICVSLILGGVILLVV), 142 to 162 (GMALSLKTAALIGLFQCLSLL), 186 to 206 (AEFSFFMAIPIMVGAFALDLL), 219 to 239 (AIAIGFVVSFLSGLVVVKFLI), and 247 to 267 (FTPFAWWRIVVGVIGLGLIYI).

This sequence belongs to the UppP family.

It is found in the cell inner membrane. It carries out the reaction di-trans,octa-cis-undecaprenyl diphosphate + H2O = di-trans,octa-cis-undecaprenyl phosphate + phosphate + H(+). Its function is as follows. Catalyzes the dephosphorylation of undecaprenyl diphosphate (UPP). Confers resistance to bacitracin. This chain is Undecaprenyl-diphosphatase, found in Caulobacter sp. (strain K31).